Here is a 4388-residue protein sequence, read N- to C-terminus: Intermembrane lipid transfer protein VPS13D (4388 aa).

One can recognise a Chorein N-terminal domain in the interval Leu-2–Gln-115. A Phosphoserine modification is found at Ser-663. The disordered stretch occupies residues Gln-745–Gly-796. The span at Asn-747–Ser-756 shows a compositional bias: basic and acidic residues. Over residues Ala-773–Glu-782 the composition is skewed to pro residues. Ser-1034, Ser-1038, Ser-1042, Ser-1138, and Ser-1341 each carry phosphoserine. The interval Ala-1563–Gly-1582 is disordered. Residues Ser-1598, Ser-1603, and Ser-1699 each carry the phosphoserine modification. Disordered regions lie at residues Arg-1741 to Pro-1771, Gln-2070 to Met-2108, and Phe-2122 to Ser-2145. Thr-1761 is modified (phosphothreonine). Phosphoserine is present on Ser-1765. Positions Val-2123 to Ser-2144 are enriched in polar residues. Phosphoserine occurs at positions 2435, 2671, 2861, 2864, and 2983. The region spanning Thr-2633 to Asn-2676 is the UBA domain. Residues Leu-3276 to Leu-3558 form the SHR-BD domain. Residue Lys-3524 is modified to N6-acetyllysine.

Belongs to the VPS13 family. Widely expressed.

In terms of biological role, mediates the transfer of lipids between membranes at organelle contact sites. Functions in promoting mitochondrial clearance by mitochondrial autophagy (mitophagy), also possibly by positively regulating mitochondrial fission. Mitophagy plays an important role in regulating cell health and mitochondrial size and homeostasis. The chain is Intermembrane lipid transfer protein VPS13D from Homo sapiens (Human).